We begin with the raw amino-acid sequence, 429 residues long: 3-phosphoshikimate 1-carboxyvinyltransferase (429 aa).

Lys22, Ser23, and Arg27 together coordinate 3-phosphoshikimate. Lys22 is a phosphoenolpyruvate binding site. Phosphoenolpyruvate is bound by residues Gly94 and Arg122. Residues Ser167, Gln169, Asp315, and Lys342 each coordinate 3-phosphoshikimate. Phosphoenolpyruvate is bound at residue Gln169. The active-site Proton acceptor is Asp315. Residues Arg346 and Arg388 each coordinate phosphoenolpyruvate.

It belongs to the EPSP synthase family. As to quaternary structure, monomer.

The protein localises to the cytoplasm. It carries out the reaction 3-phosphoshikimate + phosphoenolpyruvate = 5-O-(1-carboxyvinyl)-3-phosphoshikimate + phosphate. It functions in the pathway metabolic intermediate biosynthesis; chorismate biosynthesis; chorismate from D-erythrose 4-phosphate and phosphoenolpyruvate: step 6/7. Catalyzes the transfer of the enolpyruvyl moiety of phosphoenolpyruvate (PEP) to the 5-hydroxyl of shikimate-3-phosphate (S3P) to produce enolpyruvyl shikimate-3-phosphate and inorganic phosphate. This is 3-phosphoshikimate 1-carboxyvinyltransferase from Citrifermentans bemidjiense (strain ATCC BAA-1014 / DSM 16622 / JCM 12645 / Bem) (Geobacter bemidjiensis).